A 520-amino-acid chain; its full sequence is Glutamate--cysteine ligase (520 aa).

It belongs to the glutamate--cysteine ligase type 1 family. Type 1 subfamily.

The catalysed reaction is L-cysteine + L-glutamate + ATP = gamma-L-glutamyl-L-cysteine + ADP + phosphate + H(+). It participates in sulfur metabolism; glutathione biosynthesis; glutathione from L-cysteine and L-glutamate: step 1/2. This Leptospira interrogans serogroup Icterohaemorrhagiae serovar Lai (strain 56601) protein is Glutamate--cysteine ligase.